Reading from the N-terminus, the 545-residue chain is ATP synthase subunit alpha (545 aa).

173–180 (GDRQTGKS) lines the ATP pocket.

It belongs to the ATPase alpha/beta chains family. In terms of assembly, F-type ATPases have 2 components, CF(1) - the catalytic core - and CF(0) - the membrane proton channel. CF(1) has five subunits: alpha(3), beta(3), gamma(1), delta(1), epsilon(1). CF(0) has three main subunits: a(1), b(2) and c(9-12). The alpha and beta chains form an alternating ring which encloses part of the gamma chain. CF(1) is attached to CF(0) by a central stalk formed by the gamma and epsilon chains, while a peripheral stalk is formed by the delta and b chains.

The protein localises to the cell membrane. It carries out the reaction ATP + H2O + 4 H(+)(in) = ADP + phosphate + 5 H(+)(out). Produces ATP from ADP in the presence of a proton gradient across the membrane. The alpha chain is a regulatory subunit. This is ATP synthase subunit alpha from Pseudarthrobacter chlorophenolicus (strain ATCC 700700 / DSM 12829 / CIP 107037 / JCM 12360 / KCTC 9906 / NCIMB 13794 / A6) (Arthrobacter chlorophenolicus).